Reading from the N-terminus, the 752-residue chain is Peptidyl-prolyl cis-trans isomerase G (752 aa).

The PPIase cyclophilin-type domain maps to 11-176 (FFDIAINNQP…AEVRILSCGE (166 aa)). Basic residues predominate over residues 182 to 193 (KVKKEEKKRHKS). The segment at 182-752 (KVKKEEKKRH…SPGTDEDKSG (571 aa)) is disordered. Over residues 194-214 (SSSSSSSDSDSSSDSQSSSES) the composition is skewed to low complexity. Over residues 226 to 251 (RKRKKKHRKNSRKHKKEKKKRKKSKK) the composition is skewed to basic residues. 5 positions are modified to phosphoserine: Ser-252, Ser-254, Ser-255, Ser-257, and Ser-288. A compositionally biased stretch (basic and acidic residues) spans 290–308 (PKADDKERKNREREREREC). At Ser-313 the chain carries Phosphoserine. Basic residues predominate over residues 327–345 (SGRKIKGRGPRRYRTPSRS). 2 stretches are compositionally biased toward basic and acidic residues: residues 346–366 (RSRD…EMQR) and 377–447 (RWIK…DKYN). Phosphoserine is present on Ser-354. Thr-356 is subject to Phosphothreonine. Ser-384 carries the post-translational modification Phosphoserine. Residue Lys-390 forms a Glycyl lysine isopeptide (Lys-Gly) (interchain with G-Cter in SUMO2) linkage. Residues Ser-395, Ser-411, and Ser-413 each carry the phosphoserine modification. The span at 448–461 (KNKVKKRGKSKSRS) shows a compositional bias: basic residues. 2 stretches are compositionally biased toward basic and acidic residues: residues 462 to 552 (KSKE…DLTK) and 577 to 598 (RSHD…QEYR). Residues 599-625 (RRGRSRSRDRRTPGRSRSKDRRRRRRD) are compositionally biased toward basic residues. Residues 626 to 684 (SRSSEREESQSRNKDKYRSQESKSSHRKENSEGEKRTYSKSRDHNSSSNNREKKADREQ) are compositionally biased toward basic and acidic residues. Phosphoserine is present on residues Ser-685 and Ser-688. The span at 685–705 (SPVSKTKQSSQDNEVKSSTLK) shows a compositional bias: polar residues. Lys-691 is covalently cross-linked (Glycyl lysine isopeptide (Lys-Gly) (interchain with G-Cter in SUMO2)). Ser-694, Ser-742, and Ser-743 each carry phosphoserine. Over residues 706–752 (NQEDEKTRSPVEKENQKSKGQENDHVHDKNKKCDHESSPGTDEDKSG) the composition is skewed to basic and acidic residues. Thr-746 carries the post-translational modification Phosphothreonine. Ser-751 bears the Phosphoserine mark.

In terms of assembly, interacts with CLK1, PNN and with the phosphorylated C-terminal domain of RNA polymerase II.

It is found in the nucleus matrix. Its subcellular location is the nucleus speckle. It catalyses the reaction [protein]-peptidylproline (omega=180) = [protein]-peptidylproline (omega=0). With respect to regulation, inhibited by cyclosporin A (CsA). Its function is as follows. PPIase that catalyzes the cis-trans isomerization of proline imidic peptide bonds in oligopeptides and may therefore assist protein folding. May be implicated in the folding, transport, and assembly of proteins. May play an important role in the regulation of pre-mRNA splicing. In Mus musculus (Mouse), this protein is Peptidyl-prolyl cis-trans isomerase G (Ppig).